The primary structure comprises 382 residues: Dodecanoyl-[acyl-carrier-protein] hydrolase, chloroplastic (382 aa).

Residues 1 to 83 constitute a chloroplast transit peptide; the sequence is MATTSLASAF…FSAAEKQWTN (83 aa). Residues Asn-283, His-285, and Cys-320 contribute to the active site.

This sequence belongs to the acyl-ACP thioesterase family.

The protein localises to the plastid. It localises to the chloroplast. It carries out the reaction dodecanoyl-[ACP] + H2O = dodecanoate + holo-[ACP] + H(+). Its function is as follows. Plays an essential role in chain termination during de novo fatty acid synthesis. High thioesterase activity for myristoyl-ACP. This Cinnamomum camphora (Camphor tree) protein is Dodecanoyl-[acyl-carrier-protein] hydrolase, chloroplastic.